Here is a 74-residue protein sequence, read N- to C-terminus: ATP synthase subunit 9, mitochondrial (74 aa).

Transmembrane regions (helical) follow at residues 16-36 and 50-70; these read GLIG…IGVS and ILGF…AFLL.

Belongs to the ATPase C chain family. As to quaternary structure, F-type ATPases have 2 components, CF(1) - the catalytic core - and CF(0) - the membrane proton channel. CF(1) has five subunits: alpha(3), beta(3), gamma(1), delta(1), epsilon(1). CF(0) has three main subunits: a, b and c.

The protein resides in the mitochondrion inner membrane. Functionally, mitochondrial membrane ATP synthase (F(1)F(0) ATP synthase or Complex V) produces ATP from ADP in the presence of a proton gradient across the membrane which is generated by electron transport complexes of the respiratory chain. F-type ATPases consist of two structural domains, F(1) - containing the extramembraneous catalytic core and F(0) - containing the membrane proton channel, linked together by a central stalk and a peripheral stalk. During catalysis, ATP synthesis in the catalytic domain of F(1) is coupled via a rotary mechanism of the central stalk subunits to proton translocation. Part of the complex F(0) domain. A homomeric c-ring of probably 10 subunits is part of the complex rotary element. The sequence is that of ATP synthase subunit 9, mitochondrial (atp-9) from Neurospora crassa (strain ATCC 24698 / 74-OR23-1A / CBS 708.71 / DSM 1257 / FGSC 987).